The primary structure comprises 421 residues: UDP-N-acetylglucosamine 1-carboxyvinyltransferase (421 aa).

Residue 22-23 (KN) coordinates phosphoenolpyruvate. Residue arginine 92 participates in UDP-N-acetyl-alpha-D-glucosamine binding. Aspartate 116 serves as the catalytic Proton donor. Residues 121–125 (RPIDQ), aspartate 307, and isoleucine 330 each bind UDP-N-acetyl-alpha-D-glucosamine.

Belongs to the EPSP synthase family. MurA subfamily.

Its subcellular location is the cytoplasm. It catalyses the reaction phosphoenolpyruvate + UDP-N-acetyl-alpha-D-glucosamine = UDP-N-acetyl-3-O-(1-carboxyvinyl)-alpha-D-glucosamine + phosphate. It functions in the pathway cell wall biogenesis; peptidoglycan biosynthesis. Functionally, cell wall formation. Adds enolpyruvyl to UDP-N-acetylglucosamine. This is UDP-N-acetylglucosamine 1-carboxyvinyltransferase from Lactobacillus johnsonii (strain CNCM I-12250 / La1 / NCC 533).